Here is a 171-residue protein sequence, read N- to C-terminus: Galectin-related protein A (171 aa).

In terms of domain architecture, Galectin spans 38-170; that stretch reads PFCGHIKGGL…INGDLQLTKL (133 aa).

Its function is as follows. Does not bind lactose, and may not bind carbohydrates. This is Galectin-related protein A (lgalsl-a) from Xenopus laevis (African clawed frog).